We begin with the raw amino-acid sequence, 209 residues long: Probable GTP-binding protein EngB (209 aa).

Positions 22 to 198 (TPLEIAFVGR…NRTVGSWFDA (177 aa)) constitute an EngB-type G domain. Positions 37 and 59 each coordinate Mg(2+).

Belongs to the TRAFAC class TrmE-Era-EngA-EngB-Septin-like GTPase superfamily. EngB GTPase family. Mg(2+) is required as a cofactor.

Its function is as follows. Necessary for normal cell division and for the maintenance of normal septation. The chain is Probable GTP-binding protein EngB from Neisseria meningitidis serogroup C (strain 053442).